The following is a 512-amino-acid chain: Maturase K (512 aa).

This sequence belongs to the intron maturase 2 family. MatK subfamily.

The protein localises to the plastid. The protein resides in the chloroplast. Usually encoded in the trnK tRNA gene intron. Probably assists in splicing its own and other chloroplast group II introns. The sequence is that of Maturase K from Amorphophallus paeoniifolius (Whitespot giant arum).